Reading from the N-terminus, the 368-residue chain is NAD(P)H-quinone oxidoreductase subunit 1, chloroplastic (368 aa).

The next 6 membrane-spanning stretches (helical) occupy residues phenylalanine 27–valine 47, tryptophan 97–isoleucine 117, isoleucine 130–glycine 150, serine 269–leucine 289, isoleucine 308–methionine 328, and phenylalanine 348–leucine 368.

Belongs to the complex I subunit 1 family. NDH is composed of at least 16 different subunits, 5 of which are encoded in the nucleus.

The protein resides in the plastid. It localises to the chloroplast thylakoid membrane. It carries out the reaction a plastoquinone + NADH + (n+1) H(+)(in) = a plastoquinol + NAD(+) + n H(+)(out). It catalyses the reaction a plastoquinone + NADPH + (n+1) H(+)(in) = a plastoquinol + NADP(+) + n H(+)(out). Functionally, NDH shuttles electrons from NAD(P)H:plastoquinone, via FMN and iron-sulfur (Fe-S) centers, to quinones in the photosynthetic chain and possibly in a chloroplast respiratory chain. The immediate electron acceptor for the enzyme in this species is believed to be plastoquinone. Couples the redox reaction to proton translocation, and thus conserves the redox energy in a proton gradient. The sequence is that of NAD(P)H-quinone oxidoreductase subunit 1, chloroplastic from Physcomitrium patens (Spreading-leaved earth moss).